The chain runs to 353 residues: Green-sensitive opsin-2 (353 aa).

The Extracellular segment spans residues 1 to 47 (MAAHEPVFAARRHNEDTTRESAFVYTNANNTRDPFEGPNYHIAPRWV). A glycan (N-linked (GlcNAc...) asparagine) is linked at N29. A helical transmembrane segment spans residues 48-72 (YNVSSLWMIFVVIASVFTNGLVIVA). Topologically, residues 73 to 84 (TAKFKKLRHPLN) are cytoplasmic. The helical transmembrane segment at 85 to 110 (WILVNLAIADLGETVLASTISVINQI) threads the bilayer. The Extracellular portion of the chain corresponds to 111–124 (FGYFILGHPMCVFE). A disulfide bond links C121 and C198. Residues 125-144 (GWTVSVCGITALWSLTIISW) traverse the membrane as a helical segment. Residues 145–163 (ERWVVVCKPFGNVKFDGKW) are Cytoplasmic-facing. The chain crosses the membrane as a helical span at residues 164-187 (AAGGIIFSWVWAIIWCTPPIFGWS). Residues 188–213 (RYWPHGLKTSCGPDVFSGSEDPGVAS) are Extracellular-facing. The helical transmembrane segment at 214–241 (YMITLMLTCCILPLSIIIICYIFVWSAI) threads the bilayer. The Cytoplasmic portion of the chain corresponds to 242 to 263 (HQVAQQQKDSESTQKAEKEVSR). Residues 264-287 (MVVVMILAFIVCWGPYASFATFSA) traverse the membrane as a helical segment. Over 288–295 (VNPGYAWH) the chain is Extracellular. The helical transmembrane segment at 296–320 (PLAAAMPAYFAKSATIYNPIIYVFM) threads the bilayer. K307 bears the N6-(retinylidene)lysine mark. Over 321-353 (NRQFRSCIMQLFGKKVEDASEVSGSTTEVSTAS) the chain is Cytoplasmic.

It belongs to the G-protein coupled receptor 1 family. Opsin subfamily. The color pigments are found in the cone photoreceptor cells.

Its subcellular location is the membrane. Functionally, visual pigments are the light-absorbing molecules that mediate vision. They consist of an apoprotein, opsin, covalently linked to cis-retinal. The sequence is that of Green-sensitive opsin-2 (G101) from Psalidodon fasciatus (Banded astyanax).